The following is a 1392-amino-acid chain: DNA-directed RNA polymerase subunit beta (1392 aa).

This sequence belongs to the RNA polymerase beta chain family. In terms of assembly, the RNAP catalytic core consists of 2 alpha, 1 beta, 1 beta' and 1 omega subunit. When a sigma factor is associated with the core the holoenzyme is formed, which can initiate transcription.

The enzyme catalyses RNA(n) + a ribonucleoside 5'-triphosphate = RNA(n+1) + diphosphate. Functionally, DNA-dependent RNA polymerase catalyzes the transcription of DNA into RNA using the four ribonucleoside triphosphates as substrates. In Neisseria meningitidis serogroup B (strain ATCC BAA-335 / MC58), this protein is DNA-directed RNA polymerase subunit beta.